A 508-amino-acid chain; its full sequence is Endoglucanase 6 (508 aa).

The N-terminal stretch at 1 to 33 (MLAASLRVEAVAVVAAAVLVLLLSPAAVVVVAG) is a signal peptide. The active-site Nucleophile is the D89. Catalysis depends on residues H419, D471, and E480.

This sequence belongs to the glycosyl hydrolase 9 (cellulase E) family.

Its subcellular location is the secreted. The catalysed reaction is Endohydrolysis of (1-&gt;4)-beta-D-glucosidic linkages in cellulose, lichenin and cereal beta-D-glucans.. The sequence is that of Endoglucanase 6 from Oryza sativa subsp. japonica (Rice).